The primary structure comprises 551 residues: Preprotein translocase subunit SCY1, chloroplastic (551 aa).

A chloroplast-targeting transit peptide spans 1–67 (MITVSEVSSY…WNLGLVINSR (67 aa)). 10 consecutive transmembrane segments (helical) span residues 142–162 (FLKLLGFLALSRLGIYIPLGG), 192–212 (LGICSLGIVPFINAQIVFQLL), 241–261 (ASVGFAIVQAIGQVFYLRPYV), 268–288 (WVVSSVTLLTLGSVLTTYIGE), 295–315 (LGNGTSLLIFTSIISYLPASF), 328–348 (YTGLGTIVVSFLLLVLGIVYV), 382–402 (SAGVMPIIFSTSSLALPATLA), 415–435 (FALTPGGSFYLPTNILLIAFF), 482–502 (VLGSAFLAVLAAGPAVVEQIT), and 503–523 (HLTAFRGFAGTSVLILVGCAT).

It belongs to the SecY/SEC61-alpha family. As to quaternary structure, part of the Sec protein translocation apparatus. Interacts with SECE1, ALB3 and probably with SECA1.

Its subcellular location is the plastid. The protein resides in the chloroplast thylakoid membrane. Its function is as follows. Involved in protein export. Probably interacts with other proteins to allow the translocation of proteins across the chloroplast thylakoid membranes. Required for normal greening during embryogenesis. Central subunit of the protein translocation channel SecYE. Consists of two halves formed by TMs 1-5 and 6-10. These two domains form a lateral gate at the front which open onto the bilayer between TMs 2 and 7, and are clamped together by SecE at the back. The channel is closed by both a pore ring composed of hydrophobic SecY resides and a short helix (helix 2A) on the extracellular side of the membrane which forms a plug. The protein is Preprotein translocase subunit SCY1, chloroplastic (SCY1) of Arabidopsis thaliana (Mouse-ear cress).